The following is a 476-amino-acid chain: MGIFDYKNLGTEGSKTLFADAMAITLYSYHNLDNGFAVGYQHNGLGLGLPATLVGALLGSTDSQGVIPGIPWNPDSEKAALEAVQKAGWTPISASALGYAGKVDARGTFFGEKAGYTTAQVEVLGKYDDAGKLLEIGIGFRGTSGPRETLISDSIGDLISDLLAALGPKDYAKNYAGEAFGGLLKNVADYAGAHGLTGKDVVVSGHSLGGLAVNSMADLSNYKWAGFYKDANYVAYASPTQSAGDKVLNIGYENDPVFRALDGSSFNLSSLGVHDKPHESTTDNIVSFNDHYASTLWNVLPFSIVNLPTWVSHLPTAYGDGMTRILESGFYDQMTRDSTVIVANLSDPARANTWVQDLNRNAEPHKGNTFIIGSDGNDLIQGGNGADFIEGGKGNDTIRDNSGHNTFLFSGHFGNDRVIGYQPTDKLVFKDVQGSTDLRDHAKVVGADTVLTFGADSVTLVGVGHGGLWTEGVVIG.

An N-terminal signal peptide occupies residues 1-23 (MGIFDYKNLGTEGSKTLFADAMA). The active-site Charge relay system is the serine 207. Hemolysin-type calcium-binding repeat units lie at residues 372-389 (IGSDGNDLIQGGNGADFI), 390-407 (EGGKGNDTIRDNSGHNTF), and 410-427 (SGHFGNDRVIGYQPTDKL). Ca(2+) contacts are provided by aspartate 437, aspartate 440, and aspartate 448.

Belongs to the AB hydrolase superfamily. Lipase family.

The enzyme catalyses a triacylglycerol + H2O = a diacylglycerol + a fatty acid + H(+). This is Lipase from Pseudomonas fluorescens.